The primary structure comprises 102 residues: Circadian clock oscillator protein KaiA (102 aa).

The KaiA C-terminal domain occupies 1–102; that stretch reads MTQEVDQQIL…CEAYRGAIFK (102 aa).

This sequence belongs to the KaiA family. In terms of assembly, homodimer. The KaiABC complex composition changes during the circadian cycle to control KaiC phosphorylation. Complexes KaiC(6), KaiA(2-4):KaiC(6), KaiB(6):KaiC(6) and KaiC(6):KaiB(6):KaiA(12) are among the most important forms, many form cooperatively. KaiA and CikA bind to the same region of the KaiB(fs) form and therefore compete.

Functionally, key component of the KaiABC oscillator complex, which constitutes the main circadian regulator in cyanobacteria. Complex composition changes during the circadian cycle to control KaiC phosphorylation. KaiA stimulates KaiC autophosphorylation, while KaiB sequesters KaiA, leading to KaiC autodephosphorylation. KaiA binding to the KaiC CII domain during the subjective day yields KaiA(2-4):KaiC(6) complexes which stimulate KaiC autophosphorylation. Phospho-Ser-431 KaiC accumulation triggers binding of KaiB during the subjective night to form the KaiB(6):KaiC(6) complex, leading to changes in the output regulators CikA and SasA. KaiB(6):KaiC(6) formation exposes a site for KaiA binding on KaiB that sequesters KaiA from KaiC's CII domain, making the KaiC(6):KaiB(6):KaiA(12) complex resulting in KaiC autodephosphorylation. Complete dephosphorylation of KaiC leads to dissociation of KaiA(2):KaiB(1), completing 1 cycle of the Kai oscillator. The chain is Circadian clock oscillator protein KaiA from Nostoc sp. (strain PCC 7120 / SAG 25.82 / UTEX 2576).